The chain runs to 104 residues: Pyrimidine/purine nucleoside phosphorylase (104 aa).

The protein belongs to the nucleoside phosphorylase PpnP family.

It carries out the reaction a purine D-ribonucleoside + phosphate = a purine nucleobase + alpha-D-ribose 1-phosphate. The enzyme catalyses adenosine + phosphate = alpha-D-ribose 1-phosphate + adenine. It catalyses the reaction cytidine + phosphate = cytosine + alpha-D-ribose 1-phosphate. The catalysed reaction is guanosine + phosphate = alpha-D-ribose 1-phosphate + guanine. It carries out the reaction inosine + phosphate = alpha-D-ribose 1-phosphate + hypoxanthine. The enzyme catalyses thymidine + phosphate = 2-deoxy-alpha-D-ribose 1-phosphate + thymine. It catalyses the reaction uridine + phosphate = alpha-D-ribose 1-phosphate + uracil. The catalysed reaction is xanthosine + phosphate = alpha-D-ribose 1-phosphate + xanthine. In terms of biological role, catalyzes the phosphorolysis of diverse nucleosides, yielding D-ribose 1-phosphate and the respective free bases. Can use uridine, adenosine, guanosine, cytidine, thymidine, inosine and xanthosine as substrates. Also catalyzes the reverse reactions. This chain is Pyrimidine/purine nucleoside phosphorylase, found in Janthinobacterium sp. (strain Marseille) (Minibacterium massiliensis).